A 244-amino-acid polypeptide reads, in one-letter code: Carboxy-S-adenosyl-L-methionine synthase (244 aa).

S-adenosyl-L-methionine is bound by residues Y40, G65–S67, D90–N91, D119–L120, N134, and R201.

It belongs to the class I-like SAM-binding methyltransferase superfamily. Cx-SAM synthase family. As to quaternary structure, homodimer.

The enzyme catalyses prephenate + S-adenosyl-L-methionine = carboxy-S-adenosyl-L-methionine + 3-phenylpyruvate + H2O. Catalyzes the conversion of S-adenosyl-L-methionine (SAM) to carboxy-S-adenosyl-L-methionine (Cx-SAM). The polypeptide is Carboxy-S-adenosyl-L-methionine synthase (Geobacter metallireducens (strain ATCC 53774 / DSM 7210 / GS-15)).